Here is a 354-residue protein sequence, read N- to C-terminus: Protein RecA (354 aa).

Position 67-74 (67-74 (GPESSGKT)) interacts with ATP. Residues 331–354 (GGANSSDSKTESDENIDLETGEVF) form a disordered region. Positions 343–354 (DENIDLETGEVF) are enriched in acidic residues.

The protein belongs to the RecA family.

The protein localises to the cytoplasm. Can catalyze the hydrolysis of ATP in the presence of single-stranded DNA, the ATP-dependent uptake of single-stranded DNA by duplex DNA, and the ATP-dependent hybridization of homologous single-stranded DNAs. It interacts with LexA causing its activation and leading to its autocatalytic cleavage. This Shewanella frigidimarina (strain NCIMB 400) protein is Protein RecA.